The sequence spans 332 residues: 2-oxoglutarate-dependent dioxygenase ecdK (332 aa).

In terms of domain architecture, Fe2OG dioxygenase spans 178 to 294 (HASELRLNHY…RRSVAFFLKP (117 aa)). Residues H206, D208, and H266 each coordinate Fe cation. R285 is a binding site for 2-oxoglutarate.

This sequence belongs to the iron/ascorbate-dependent oxidoreductase family. It depends on Fe(2+) as a cofactor.

The protein operates within antifungal biosynthesis. 2-oxoglutarate-dependent dioxygenase; part of the gene cluster that mediates the biosynthesis of echinocandin B, a fungal lipidated cyclic hexapeptide that acts as an antifungal agent. Linoleoyl-AMP, produced by the fatty-acyl-AMP ligase ecdI, is transferred to the initiation carrier domain (T0) of ecdA. The linoleoyl-S-phosphopantetheinyl-T0 is sequentially extended with L-ornithine, L-threonine, L-proline, L-homotyrosine, L-threonine, and 4R-methyl-L-proline to form the linear hexapeptide. Thereafter, the terminal condensation (C7) performs macrocyclization of the NRPS product and the cyclic scaffold is released from ecdA. All six of the amino acid residues are hydroxylated, including 4R,5R-dihydroxy-L-ornithine, 4R-hydroxyl-L-proline, 3S,4S-dihydroxy-L-homotyrosine, and 3S-hydroxyl-4S-methyl-L-prolin. In the pathway, all the hydroxylation reactions are proposed to occur following completion of the cyclic peptide, so the unhydroxylated precursor produced by ecdA will undergo six rounds of hydroxylation. Five hydroxylase genes (ecdG, ecdH, ecdK, htyE and htyF) are embedded within the echinocandin B (ecd) and L-homotyrosine (hty) clusters. In Aspergillus rugulosus (Emericella rugulosa), this protein is 2-oxoglutarate-dependent dioxygenase ecdK.